A 236-amino-acid chain; its full sequence is Auxin-responsive protein IAA13 (236 aa).

Disordered stretches follow at residues 1 to 24 (MAGA…GGAA), 52 to 93 (EAAA…WPPV), and 105 to 130 (SVKS…GSNS). Positions 12 to 16 (LRLGL) match the EAR-like (transcriptional repression) motif. The segment covering 52–61 (EAAAGKAEAP) has biased composition (low complexity). Residues 62-81 (AAEKAKRPAEAAAADAEKPP) are compositionally biased toward basic and acidic residues. Over residues 117–130 (QQQQPAANASGSNS) the composition is skewed to low complexity. The 88-residue stretch at 131-218 (SAFVKVSMDG…SCKRLRIMKG (88 aa)) folds into the PB1 domain.

The protein belongs to the Aux/IAA family. As to quaternary structure, homodimers and heterodimers.

It localises to the nucleus. Aux/IAA proteins are short-lived transcriptional factors that function as repressors of early auxin response genes at low auxin concentrations. The protein is Auxin-responsive protein IAA13 (IAA13) of Oryza sativa subsp. japonica (Rice).